A 57-amino-acid polypeptide reads, in one-letter code: Small ribosomal subunit protein bS21 (57 aa).

The protein belongs to the bacterial ribosomal protein bS21 family.

The chain is Small ribosomal subunit protein bS21 from Lysinibacillus sphaericus (strain C3-41).